A 407-amino-acid chain; its full sequence is Shaggy-related protein kinase iota (407 aa).

The span at 1-19 shows a compositional bias: low complexity; it reads MASLPLGPQPHALAPPLQL. The segment at 1 to 23 is disordered; sequence MASLPLGPQPHALAPPLQLHDGD. Ala2 is modified (N-acetylalanine). In terms of domain architecture, Protein kinase spans 70–354; sequence YMAERVVGTG…ALEACAHPFF (285 aa). ATP contacts are provided by residues 76–84 and Lys99; that span reads VGTGSFGIV. Asp195 serves as the catalytic Proton acceptor. Position 230 is a phosphotyrosine (Tyr230).

It belongs to the protein kinase superfamily. CMGC Ser/Thr protein kinase family. GSK-3 subfamily. Binds to KIB1. Interacts with BSK6. In terms of processing, autophosphorylated mainly on threonine and serine residues.

The enzyme catalyses L-seryl-[protein] + ATP = O-phospho-L-seryl-[protein] + ADP + H(+). The catalysed reaction is L-threonyl-[protein] + ATP = O-phospho-L-threonyl-[protein] + ADP + H(+). In terms of biological role, phosphorylates BSK1, BSK3, BSK5, BSK6, BSK8 and BSK11 in vitro. May mediate extracellular signals to regulate transcription in differentiating cells. This is Shaggy-related protein kinase iota (ASK9) from Arabidopsis thaliana (Mouse-ear cress).